Here is a 295-residue protein sequence, read N- to C-terminus: Ribosomal RNA small subunit methyltransferase A (295 aa).

Residues N31, L33, G58, E79, D104, and N129 each contribute to the S-adenosyl-L-methionine site.

This sequence belongs to the class I-like SAM-binding methyltransferase superfamily. rRNA adenine N(6)-methyltransferase family. RsmA subfamily.

The protein localises to the cytoplasm. It carries out the reaction adenosine(1518)/adenosine(1519) in 16S rRNA + 4 S-adenosyl-L-methionine = N(6)-dimethyladenosine(1518)/N(6)-dimethyladenosine(1519) in 16S rRNA + 4 S-adenosyl-L-homocysteine + 4 H(+). In terms of biological role, specifically dimethylates two adjacent adenosines (A1518 and A1519) in the loop of a conserved hairpin near the 3'-end of 16S rRNA in the 30S particle. May play a critical role in biogenesis of 30S subunits. The sequence is that of Ribosomal RNA small subunit methyltransferase A from Leuconostoc mesenteroides subsp. mesenteroides (strain ATCC 8293 / DSM 20343 / BCRC 11652 / CCM 1803 / JCM 6124 / NCDO 523 / NBRC 100496 / NCIMB 8023 / NCTC 12954 / NRRL B-1118 / 37Y).